Reading from the N-terminus, the 513-residue chain is Abl interactor 2 (513 aa).

Ser40 bears the Phosphoserine mark. The t-SNARE coiled-coil homology domain occupies 45-107 (RALEETKAYT…DIHKEKVARR (63 aa)). The disordered stretch occupies residues 167–431 (KMGGLPRTTP…PPEDYEEEEA (265 aa)). Over residues 174-185 (TTPPTQKPPSPP) the composition is skewed to pro residues. Phosphoserine is present on residues Ser183 and Ser227. A compositionally biased stretch (polar residues) spans 217-241 (PTRNMAPSQQSPVRTASVNQRNRTY). Positions 242 to 272 (SSSGSSGGSHPSSRSSSRENSGSGSVGVPIA) are enriched in low complexity. Residues 273–282 (VPTPSPPSVF) are compositionally biased toward pro residues. Residues 283 to 325 (PAPAGSAGTPPLPATSASAPAPLVPATVPSSTAPNAAAGGAPN) are compositionally biased toward low complexity. Thr361 is subject to Phosphothreonine. Ser368 carries the phosphoserine modification. Residues 376–399 (SITSQTSLQNQMNGGPFYSQNPVS) are compositionally biased toward polar residues. Positions 400–409 (DTPPPPPPVE) are enriched in pro residues. Positions 451 to 510 (SYLEKVVAIYDYTKDKEDELSFQEGAIIYVIKKNDDGWYEGVMNGVTGLFPGNYVESIMH) constitute an SH3 domain.

The protein belongs to the ABI family. In terms of assembly, component of the WAVE complex composed of ABI2, CYFIP1 or CYFIP2, BRK1, NCKAP1 and WASF1/WAVE1. Within the complex, a heterodimer containing NCKAP1 and CYFIP1 interacts with a heterotrimer formed by WAVE1, ABI2 and BRK1. CYFIP2 binds to activated RAC1 which causes the complex to dissociate, releasing activated WASF1. Interacts (via SH3 domain) with ABL1 and ABL2. As to quaternary structure, (Microbial infection) Interacts with human cytomegalovirus UL135. Phosphorylated by ABL1. Widely expressed. Abundant in testes, ovary, thymus, and colon, with lower but detectable levels in prostate, peripheral blood leukocytes, and spleen.

It is found in the cytoplasm. The protein resides in the nucleus. The protein localises to the cell projection. It localises to the lamellipodium. Its subcellular location is the filopodium. It is found in the cytoskeleton. The protein resides in the cell junction. The protein localises to the adherens junction. Functionally, regulator of actin cytoskeleton dynamics underlying cell motility and adhesion. Functions as a component of the WAVE complex, which activates actin nucleating machinery Arp2/3 to drive lamellipodia formation. Acts as a regulator and substrate of nonreceptor tyrosine kinases ABL1 and ABL2 involved in processes linked to cell growth and differentiation. Positively regulates ABL1-mediated phosphorylation of ENAH, which is required for proper polymerization of nucleated actin filaments at the leading edge. Contributes to the regulation of actin assembly at the tips of neuron projections. In particular, controls dendritic spine morphogenesis and may promote dendritic spine specification toward large mushroom-type spines known as repositories of memory in the brain. In hippocampal neurons, may mediate actin-dependent BDNF-NTRK2 early endocytic trafficking that triggers dendrite outgrowth. Participates in ocular lens morphogenesis, likely by regulating lamellipodia-driven adherens junction formation at the epithelial cell-secondary lens fiber interface. Also required for nascent adherens junction assembly in epithelial cells. This chain is Abl interactor 2, found in Homo sapiens (Human).